The chain runs to 430 residues: MATAVRAVGCLPVLCSGTAGHLLGRQCSLNTLPAASILAWKSVLGNGHLSSLGTRDTHPYASLSRALQTQCCISSPSHLMSQQYRPYSFFTKLTADELWKGALAETGAGAKKGRGKRTKKKKRKDLNRGQIIGEGRYGFLWPGLNVPLMKNGAVQTIAQRSKEEQEKVEADMIQQREEWDRKKKMKVKRERGWSGNSWGGISLGPPDPGPCGETYEDFDTRILEVRNVFTMTAKEGRKKSIRVLVAVGNGKGAAGFSIGKATDRMDAFRKAKNRAVHHLHYIERYEDHTIFHDISLRFKRTHIKMKKQPKGYGLRCHRAIITICRLIGIKDMYAKVSGSINMLSLTQGLFRGLSRQETHQQLADKKGLHVVEIREECGPLPIVVASPRGPLRKDPEPEDEVPDVKLDWEDVKTAQGMKRSVWSNLKRAAT.

The region spanning 218–282 (FDTRILEVRN…NRAVHHLHYI (65 aa)) is the S5 DRBM domain.

Belongs to the universal ribosomal protein uS5 family. As to quaternary structure, component of the mitochondrial small ribosomal subunit (mt-SSU). Mature mammalian 55S mitochondrial ribosomes consist of a small (28S) and a large (39S) subunit. The 28S small subunit contains a 12S ribosomal RNA (12S mt-rRNA) and 30 different proteins. The 39S large subunit contains a 16S rRNA (16S mt-rRNA), a copy of mitochondrial valine transfer RNA (mt-tRNA(Val)), which plays an integral structural role, and 52 different proteins.

It is found in the mitochondrion. The protein is Small ribosomal subunit protein uS5m (MRPS5) of Homo sapiens (Human).